The following is a 309-amino-acid chain: 2-dehydro-3-deoxygluconokinase (309 aa).

Substrate contacts are provided by residues 28–32, tyrosine 88, 102–104, and arginine 170; these read GDTLN and YWR. Residues 168–170, 228–233, and 261–264 each bind ATP; these read NYR, KRGADS, and AAGD. Substrate is bound at residue aspartate 264. The active-site Proton acceptor is aspartate 264.

The protein belongs to the carbohydrate kinase pfkB family.

The catalysed reaction is 2-dehydro-3-deoxy-D-gluconate + ATP = 2-dehydro-3-deoxy-6-phospho-D-gluconate + ADP + H(+). It functions in the pathway carbohydrate acid metabolism; 2-dehydro-3-deoxy-D-gluconate degradation; D-glyceraldehyde 3-phosphate and pyruvate from 2-dehydro-3-deoxy-D-gluconate: step 1/2. Its function is as follows. Catalyzes the phosphorylation of 2-keto-3-deoxygluconate (KDG) to produce 2-keto-3-deoxy-6-phosphogluconate (KDPG). This Escherichia coli (strain ATCC 9637 / CCM 2024 / DSM 1116 / LMG 11080 / NBRC 13500 / NCIMB 8666 / NRRL B-766 / W) protein is 2-dehydro-3-deoxygluconokinase (kdgK).